The following is a 139-amino-acid chain: Translation initiation factor 2 subunit beta (139 aa).

Belongs to the eIF-2-beta/eIF-5 family. Heterotrimer composed of an alpha, a beta and a gamma chain.

Its function is as follows. eIF-2 functions in the early steps of protein synthesis by forming a ternary complex with GTP and initiator tRNA. The chain is Translation initiation factor 2 subunit beta from Saccharolobus islandicus (strain Y.N.15.51 / Yellowstone #2) (Sulfolobus islandicus).